Consider the following 466-residue polypeptide: UDP-glycosyltransferase 91B1 (466 aa).

UDP-alpha-D-glucose contacts are provided by residues T286, 342–344, 359–367, and 381–384; these read VPQ, HCGWGSAVE, and NLDQ.

Belongs to the UDP-glycosyltransferase family.

In Arabidopsis thaliana (Mouse-ear cress), this protein is UDP-glycosyltransferase 91B1 (UGT91B1).